Consider the following 311-residue polypeptide: Heme A synthase (311 aa).

The Cytoplasmic segment spans residues 1 to 6 (MQRFIK). Residues 7–27 (WLAVITSLDLLIVLLGGALVT) form a helical membrane-spanning segment. Over 28-62 (KTGSGQGCGKSWPLCNGEFVPSNLSMETIIELSHR) the chain is Extracellular. A disulfide bond links Cys-35 and Cys-42. Residue Glu-58 is part of the active site. His-61 contacts heme o. The helical transmembrane segment at 63–83 (LTSGSAGILVTLLCILSWKYY) threads the bilayer. The Cytoplasmic portion of the chain corresponds to 84 to 91 (KHVRETKT). Residues 92-112 (LAILSFVFLVAQALMGAAAVV) form a helical membrane-spanning segment. At 113–121 (WGQMPAVLA) the chain is on the extracellular side. The helical transmembrane segment at 122–142 (IHFGISLISFASVILLTCLIF) threads the bilayer. Residue His-123 coordinates heme o. The Cytoplasmic segment spans residues 143 to 159 (EIDQKFDARSLIMDKKM). A helical transmembrane segment spans residues 160 to 180 (KFHIYGVTIYCYLVVYTGALV). At 181 to 211 (RHERASLACPDFPLCSKNRPMPTQLHEWVQM) the chain is on the extracellular side. A disulfide bridge links Cys-189 with Cys-195. The chain crosses the membrane as a helical span at residues 212-232 (GHRLAAMLIFVWILYAMILAI). Residue His-213 participates in heme b binding. The Cytoplasmic portion of the chain corresponds to 233–243 (RHYKQQPVVYW). The chain crosses the membrane as a helical span at residues 244-264 (GWIISFILVTLQAIVGILVVF). At 265–271 (TNASLAM) the chain is on the extracellular side. The helical transmembrane segment at 272–292 (ALLHSLFISCLFAVLCYLVML) threads the bilayer. His-275 provides a ligand contact to heme b. At 293–311 (GTRSKVNAKEAASTSKQTK) the chain is on the cytoplasmic side.

This sequence belongs to the COX15/CtaA family. Type 1 subfamily. As to quaternary structure, interacts with CtaB. The cofactor is heme b.

The protein resides in the cell membrane. It carries out the reaction Fe(II)-heme o + 2 A + H2O = Fe(II)-heme a + 2 AH2. The protein operates within porphyrin-containing compound metabolism; heme A biosynthesis; heme A from heme O: step 1/1. Its function is as follows. Catalyzes the conversion of heme O to heme A by two successive hydroxylations of the methyl group at C8. The first hydroxylation forms heme I, the second hydroxylation results in an unstable dihydroxymethyl group, which spontaneously dehydrates, resulting in the formyl group of heme A. This Bacillus cereus (strain 03BB102) protein is Heme A synthase.